The primary structure comprises 426 residues: Gamma-glutamyl phosphate reductase (426 aa).

Belongs to the gamma-glutamyl phosphate reductase family.

The protein resides in the cytoplasm. The catalysed reaction is L-glutamate 5-semialdehyde + phosphate + NADP(+) = L-glutamyl 5-phosphate + NADPH + H(+). The protein operates within amino-acid biosynthesis; L-proline biosynthesis; L-glutamate 5-semialdehyde from L-glutamate: step 2/2. In terms of biological role, catalyzes the NADPH-dependent reduction of L-glutamate 5-phosphate into L-glutamate 5-semialdehyde and phosphate. The product spontaneously undergoes cyclization to form 1-pyrroline-5-carboxylate. This chain is Gamma-glutamyl phosphate reductase, found in Delftia acidovorans (strain DSM 14801 / SPH-1).